Here is a 321-residue protein sequence, read N- to C-terminus: Polygalacturonan/rhamnogalacturonan transport system permease protein YteP (321 aa).

The region spanning 1–144 (MKTAEAQAPA…YIPHFMSWVI (144 aa)) is the ABC transmembrane type-1 domain. 3 consecutive transmembrane segments (helical) span residues 21-41 (RKRLLIKLIQQKYLYLMILPG), 63-83 (YQPFLGILGSEWVGLKHFIRL), and 123-143 (IALFKKFVQTLIYIPHFMSWV).

The protein belongs to the binding-protein-dependent transport system permease family. The complex is probably composed of two ATP-binding proteins (MsmX), two transmembrane proteins (YtcP and YteP) and a solute-binding protein (YtcQ).

Its subcellular location is the cell membrane. In terms of biological role, involved in pectin degradation. Part of the ABC transporter complex YtcQP-YteP involved in the uptake of polygalacturonan and rhamnogalacturonan type I. Responsible for the translocation of the substrate across the membrane. The protein is Polygalacturonan/rhamnogalacturonan transport system permease protein YteP (yteP) of Bacillus subtilis (strain 168).